Here is a 951-residue protein sequence, read N- to C-terminus: Serine/threonine-protein kinase 10 (951 aa).

In terms of domain architecture, Protein kinase spans 36–294 (WEIIGELGDG…AAQLLEHPFV (259 aa)). Residues 42–50 (LGDGAFGKV) and K65 contribute to the ATP site. Residue D157 is the Proton acceptor of the active site. A compositionally biased stretch (acidic residues) spans 319 to 330 (EENGEVEEEEAS). The segment at 319 to 479 (EENGEVEEEE…DSGSNSASES (161 aa)) is disordered. Residues 331 to 343 (DTPSSNKSVSQSA) show a composition bias toward polar residues. Positions 345–356 (GEKDKHTGKEHV) are enriched in basic and acidic residues. Residues 364–373 (PQNTDSQADI) are compositionally biased toward polar residues. Composition is skewed to basic and acidic residues over residues 374–394 (HSQK…HDAV) and 410–427 (HEPK…EEHG). The span at 429–443 (AVSSNQRPKSSQSDR) shows a compositional bias: polar residues. Residues S483, S487, and S491 each carry the phosphoserine; by PLK1 modification. The stretch at 583–723 (EQEMNSKRKF…NKKQQLLRDR (141 aa)) forms a coiled coil. Residues 785–800 (QERARLPKNQKAEAKT) show a composition bias toward basic and acidic residues. The interval 785–804 (QERARLPKNQKAEAKTRMTM) is disordered. A coiled-coil region spans residues 898–928 (RENLRPRKKALEDELEHKKEEQEMFFRMNEE). Residues 930–951 (AGHPFPSNKPAKFYSFSSPEAS) are disordered.

Belongs to the protein kinase superfamily. STE Ser/Thr protein kinase family. STE20 subfamily. As to quaternary structure, homodimer. In terms of processing, autophosphorylates. Phosphorylated by plk1/plx1, suggesting the existence of a feedback loop with plk1/plx1. activation of the protein.

It is found in the cell membrane. It catalyses the reaction L-seryl-[protein] + ATP = O-phospho-L-seryl-[protein] + ADP + H(+). It carries out the reaction L-threonyl-[protein] + ATP = O-phospho-L-threonyl-[protein] + ADP + H(+). In terms of biological role, may act as a polo kinase kinase by mediating phosphorylation of plk1/plx1 and subsequent activation of plk1/plx1 during oocyte maturation. This Xenopus tropicalis (Western clawed frog) protein is Serine/threonine-protein kinase 10 (stk10).